The chain runs to 365 residues: U1 snRNP-associated protein usp109 (365 aa).

RRM domains are found at residues 3 to 79, 86 to 162, and 189 to 259; these read TSLW…VVPE, YMLF…SVKS, and TAVY…WARP.

Component of the U1 snRNP complex.

The protein resides in the nucleus. This is U1 snRNP-associated protein usp109 (usp109) from Schizosaccharomyces pombe (strain 972 / ATCC 24843) (Fission yeast).